Here is a 468-residue protein sequence, read N- to C-terminus: Methylenetetrahydrofolate--tRNA-(uracil-5-)-methyltransferase TrmFO (468 aa).

13–18 (GGGLAG) is a binding site for FAD.

This sequence belongs to the MnmG family. TrmFO subfamily. Requires FAD as cofactor.

Its subcellular location is the cytoplasm. It catalyses the reaction uridine(54) in tRNA + (6R)-5,10-methylene-5,6,7,8-tetrahydrofolate + NADH + H(+) = 5-methyluridine(54) in tRNA + (6S)-5,6,7,8-tetrahydrofolate + NAD(+). The enzyme catalyses uridine(54) in tRNA + (6R)-5,10-methylene-5,6,7,8-tetrahydrofolate + NADPH + H(+) = 5-methyluridine(54) in tRNA + (6S)-5,6,7,8-tetrahydrofolate + NADP(+). Catalyzes the folate-dependent formation of 5-methyl-uridine at position 54 (M-5-U54) in all tRNAs. The sequence is that of Methylenetetrahydrofolate--tRNA-(uracil-5-)-methyltransferase TrmFO from Bartonella henselae (strain ATCC 49882 / DSM 28221 / CCUG 30454 / Houston 1) (Rochalimaea henselae).